Reading from the N-terminus, the 193-residue chain is dCTP deaminase (193 aa).

Residues 110 to 115 (RSSLAR), D128, 136 to 138 (VLE), Y171, K178, and Q182 each bind dCTP. E138 functions as the Proton donor/acceptor in the catalytic mechanism. A disordered region spans residues 169 to 193 (RPYNRRQDAKYRDQQGAVASRIDKD).

It belongs to the dCTP deaminase family. As to quaternary structure, homotrimer.

It carries out the reaction dCTP + H2O + H(+) = dUTP + NH4(+). It participates in pyrimidine metabolism; dUMP biosynthesis; dUMP from dCTP (dUTP route): step 1/2. Catalyzes the deamination of dCTP to dUTP. The polypeptide is dCTP deaminase (Citrobacter koseri (strain ATCC BAA-895 / CDC 4225-83 / SGSC4696)).